The following is a 286-amino-acid chain: Glycine--tRNA ligase alpha subunit (286 aa).

The protein belongs to the class-II aminoacyl-tRNA synthetase family. As to quaternary structure, tetramer of two alpha and two beta subunits.

It is found in the cytoplasm. It carries out the reaction tRNA(Gly) + glycine + ATP = glycyl-tRNA(Gly) + AMP + diphosphate. This Campylobacter lari (strain RM2100 / D67 / ATCC BAA-1060) protein is Glycine--tRNA ligase alpha subunit.